Here is a 258-residue protein sequence, read N- to C-terminus: MAMPEFTLRQLLEAGVHFGHHTRRWNPRMAPFIFGVRNQVHILDLQQTVPLLDRSLRAIRDVVAGGGRVLFVGTKRAAAEYVAESAQRCGQYYVNHRWLGGMLTNWKTITGSIKRLRQIDEMLAGDTTGLTKKEVLDITRDREKLERALGGIKDMGGLPDILFIIDTNKEKLAVEEANKLGIPVVAVLDSNSDPSGVTYPIPGNDDAIRAITMYCDLVASAVLDGISAEMIASGRDLGAAEELAPEILPEPEAEQATA.

This sequence belongs to the universal ribosomal protein uS2 family.

This Granulibacter bethesdensis (strain ATCC BAA-1260 / CGDNIH1) protein is Small ribosomal subunit protein uS2.